The primary structure comprises 306 residues: Curved DNA-binding protein (306 aa).

Residues 5–69 enclose the J domain; it reads DYYAIMGVKP…QRRAEYDQMW (65 aa).

The protein localises to the cytoplasm. The protein resides in the nucleoid. DNA-binding protein that preferentially recognizes a curved DNA sequence. It is probably a functional analog of DnaJ; displays overlapping activities with DnaJ, but functions under different conditions, probably acting as a molecular chaperone in an adaptive response to environmental stresses other than heat shock. Lacks autonomous chaperone activity; binds native substrates and targets them for recognition by DnaK. Its activity is inhibited by the binding of CbpM. The sequence is that of Curved DNA-binding protein from Escherichia coli O8 (strain IAI1).